Here is a 597-residue protein sequence, read N- to C-terminus: MFS-type transporter FPY5 (597 aa).

The interval 1 to 55 (MSETTGLPLKHLQGSPPGTPVNTNNESNEASPDDGCRLPDTVTEAEASSDNHGSV) is disordered. 2 stretches are compositionally biased toward polar residues: residues 20–30 (PVNTNNESNEA) and 46–55 (EASSDNHGSV). The N-linked (GlcNAc...) asparagine glycan is linked to Asn-25. A glycan (N-linked (GlcNAc...) asparagine) is linked at Asn-72. Transmembrane regions (helical) follow at residues 94-114 (LSLL…VSIV), 120-140 (FNMA…FLII), 147-167 (IFGC…FSMA), 183-203 (FQGM…PLMV), 214-234 (IMSS…GAIT), 241-261 (WVFY…AFSV), 286-306 (VDFV…FALE), 316-336 (SGAI…FIAW), and 360-380 (FVMG…AALI). Asn-390 carries an N-linked (GlcNAc...) asparagine glycan. The next 5 helical transmembrane spans lie at 402–422 (LPLL…VSKL), 424–444 (VPPL…VGLY), 463–483 (IMGL…PLVV), 498–518 (IRVL…INHI), and 562–582 (EQMR…VLLV).

Belongs to the major facilitator superfamily. TCR/Tet family.

It is found in the membrane. The protein operates within secondary metabolite biosynthesis. In terms of biological role, MFS-type transporter; part of the gene cluster that mediates the biosynthesis of the gamma-pyrones fusapyrone (FPY) and deoxyfusapyrone (dFPY). The polypeptide is MFS-type transporter FPY5 (Fusarium mangiferae (Mango malformation disease fungus)).